Consider the following 88-residue polypeptide: Small ribosomal subunit protein bS18 (88 aa).

It belongs to the bacterial ribosomal protein bS18 family. In terms of assembly, part of the 30S ribosomal subunit. Forms a tight heterodimer with protein bS6.

Binds as a heterodimer with protein bS6 to the central domain of the 16S rRNA, where it helps stabilize the platform of the 30S subunit. The sequence is that of Small ribosomal subunit protein bS18 from Syntrophus aciditrophicus (strain SB).